Here is a 207-residue protein sequence, read N- to C-terminus: Cytochrome c biogenesis ATP-binding export protein CcmA (207 aa).

The ABC transporter domain maps to 4–207; the sequence is LEVRELLCER…RISLTQTRAV (204 aa). Position 36-43 (36-43) interacts with ATP; sequence GSNGAGKT.

Belongs to the ABC transporter superfamily. CcmA exporter (TC 3.A.1.107) family. The complex is composed of two ATP-binding proteins (CcmA) and two transmembrane proteins (CcmB).

Its subcellular location is the cell inner membrane. It carries out the reaction heme b(in) + ATP + H2O = heme b(out) + ADP + phosphate + H(+). Part of the ABC transporter complex CcmAB involved in the biogenesis of c-type cytochromes; once thought to export heme, this seems not to be the case, but its exact role is uncertain. Responsible for energy coupling to the transport system. This is Cytochrome c biogenesis ATP-binding export protein CcmA from Shigella dysenteriae serotype 1 (strain Sd197).